Consider the following 203-residue polypeptide: Glycerol-3-phosphate acyltransferase (203 aa).

6 helical membrane passes run 5–25 (IIYLLAYLIGAIPFGLLLAQI), 58–78 (TLAVATVILDALKGVLPILMA), 87–107 (ILWTMAVLAVFGHCFSPYLKF), 118–138 (GVLAVFLPFEIICALLAWFII), 150–170 (LGAMIVLIATSFIFHYDIPVI), and 176–196 (IFIIAFIVVYKHIPNILRLIG).

It belongs to the PlsY family. Probably interacts with PlsX.

It is found in the cell inner membrane. It catalyses the reaction an acyl phosphate + sn-glycerol 3-phosphate = a 1-acyl-sn-glycero-3-phosphate + phosphate. Its pathway is lipid metabolism; phospholipid metabolism. In terms of biological role, catalyzes the transfer of an acyl group from acyl-phosphate (acyl-PO(4)) to glycerol-3-phosphate (G3P) to form lysophosphatidic acid (LPA). This enzyme utilizes acyl-phosphate as fatty acyl donor, but not acyl-CoA or acyl-ACP. This chain is Glycerol-3-phosphate acyltransferase, found in Campylobacter lari (strain RM2100 / D67 / ATCC BAA-1060).